The chain runs to 306 residues: Transcription initiation factor IIB 2 (306 aa).

A TFIIB-type zinc finger spans residues 6–37 (PKRVCPICGSTEFIYDPRRGEIVCAKCGYVIE). Residues C10, C13, C29, and C32 each contribute to the Zn(2+) site. 2 tandem repeats follow at residues 123 to 206 (SELD…ARGL) and 217 to 298 (EYVD…ELVE).

It belongs to the TFIIB family.

In terms of biological role, stabilizes TBP binding to an archaeal box-A promoter. Also responsible for recruiting RNA polymerase II to the pre-initiation complex (DNA-TBP-TFIIB). The sequence is that of Transcription initiation factor IIB 2 from Thermococcus kodakarensis (strain ATCC BAA-918 / JCM 12380 / KOD1) (Pyrococcus kodakaraensis (strain KOD1)).